Here is a 359-residue protein sequence, read N- to C-terminus: 4-hydroxy-3-methylbut-2-en-1-yl diphosphate synthase (flavodoxin) (359 aa).

Residues C263, C266, C298, and E305 each coordinate [4Fe-4S] cluster.

It belongs to the IspG family. Requires [4Fe-4S] cluster as cofactor.

The enzyme catalyses (2E)-4-hydroxy-3-methylbut-2-enyl diphosphate + oxidized [flavodoxin] + H2O + 2 H(+) = 2-C-methyl-D-erythritol 2,4-cyclic diphosphate + reduced [flavodoxin]. It functions in the pathway isoprenoid biosynthesis; isopentenyl diphosphate biosynthesis via DXP pathway; isopentenyl diphosphate from 1-deoxy-D-xylulose 5-phosphate: step 5/6. Its function is as follows. Converts 2C-methyl-D-erythritol 2,4-cyclodiphosphate (ME-2,4cPP) into 1-hydroxy-2-methyl-2-(E)-butenyl 4-diphosphate. In Wolinella succinogenes (strain ATCC 29543 / DSM 1740 / CCUG 13145 / JCM 31913 / LMG 7466 / NCTC 11488 / FDC 602W) (Vibrio succinogenes), this protein is 4-hydroxy-3-methylbut-2-en-1-yl diphosphate synthase (flavodoxin).